Here is a 312-residue protein sequence, read N- to C-terminus: Very-long-chain 3-oxoacyl-CoA reductase (312 aa).

A helical membrane pass occupies residues Ala4–Leu24. Gly50–Leu79 is a binding site for NADP(+). Transmembrane regions (helical) follow at residues Gly182–Tyr202 and Gly271–Phe291. Ser189 is a binding site for substrate. Tyr202 (proton acceptor) is an active-site residue. Positions Lys308–Asn312 match the Di-lysine motif motif.

Belongs to the short-chain dehydrogenases/reductases (SDR) family. 17-beta-HSD 3 subfamily.

The protein localises to the endoplasmic reticulum membrane. It carries out the reaction a very-long-chain (3R)-3-hydroxyacyl-CoA + NADP(+) = a very-long-chain 3-oxoacyl-CoA + NADPH + H(+). The enzyme catalyses 17beta-estradiol + NAD(+) = estrone + NADH + H(+). It catalyses the reaction 17beta-estradiol + NADP(+) = estrone + NADPH + H(+). The catalysed reaction is 3-oxooctadecanoyl-CoA + NADPH + H(+) = (3R)-hydroxyoctadecanoyl-CoA + NADP(+). It carries out the reaction (7Z,10Z,13Z,16Z)-3-oxodocosatetraenoyl-CoA + NADPH + H(+) = (3R)-hydroxy-(7Z,10Z,13Z,16Z)-docosatetraenoyl-CoA + NADP(+). The enzyme catalyses 3-oxo-(7Z,10Z,13Z,16Z,19Z)-docosapentaenoyl-CoA + NADPH + H(+) = (3R)-hydroxy-(7Z,10Z,13Z,16Z,19Z)-docosapentaenoyl-CoA + NADP(+). It catalyses the reaction (8Z,11Z,14Z)-3-oxoeicosatrienoyl-CoA + NADPH + H(+) = (3R)-hydroxy-(8Z,11Z,14Z)-eicosatrienoyl-CoA + NADP(+). The protein operates within lipid metabolism; fatty acid biosynthesis. It functions in the pathway steroid biosynthesis; estrogen biosynthesis. Its function is as follows. Catalyzes the second of the four reactions of the long-chain fatty acids elongation cycle. This endoplasmic reticulum-bound enzymatic process, allows the addition of two carbons to the chain of long- and very long-chain fatty acids/VLCFAs per cycle. This enzyme has a 3-ketoacyl-CoA reductase activity, reducing 3-ketoacyl-CoA to 3-hydroxyacyl-CoA, within each cycle of fatty acid elongation. Thereby, it may participate in the production of VLCFAs of different chain lengths that are involved in multiple biological processes as precursors of membrane lipids and lipid mediators. May also catalyze the transformation of estrone (E1) into estradiol (E2) and play a role in estrogen formation. The sequence is that of Very-long-chain 3-oxoacyl-CoA reductase from Rattus norvegicus (Rat).